The following is a 692-amino-acid chain: Peroxisomal primary amine oxidase (692 aa).

The segment covering 1 to 22 (MERLRQIASQATAASAAPARPA) has biased composition (low complexity). The tract at residues 1-26 (MERLRQIASQATAASAAPARPAHPLD) is disordered. Asn243 carries N-linked (GlcNAc...) asparagine glycosylation. 317-328 (ALDIGEYGAGYM) is a binding site for substrate. Asp319 acts as the Proton acceptor in catalysis. Cys338 and Cys364 form a disulfide bridge. A substrate-binding site is contributed by 402–407 (AANYEY). Tyr405 functions as the Schiff-base intermediate with substrate; via topaquinone in the catalytic mechanism. 2',4',5'-topaquinone is present on Tyr405. Cu cation-binding residues include His456 and His458. Residues Asp465, Asp613, and Ile614 each coordinate Mn(2+). His624 provides a ligand contact to Cu cation.

This sequence belongs to the copper/topaquinone oxidase family. Homodimer. It depends on Cu cation as a cofactor. Zn(2+) is required as a cofactor. L-topaquinone serves as cofactor. Requires Mn(2+) as cofactor. In terms of processing, topaquinone (TPQ) is generated by copper-dependent autoxidation of a specific tyrosyl residue.

Its subcellular location is the peroxisome. It carries out the reaction a primary methyl amine + O2 + H2O = an aldehyde + H2O2 + NH4(+). In Pichia angusta (Yeast), this protein is Peroxisomal primary amine oxidase (AMO).